Consider the following 398-residue polypeptide: Na(+)/H(+) antiporter NhaA (398 aa).

12 helical membrane passes run 9–29, 57–77, 95–115, 124–144, 154–174, 177–197, 204–224, 226–246, 255–275, 288–308, 329–349, and 359–379; these read MITH…AAIV, LSLL…AVGL, AFPA…YSLM, AGWA…LALL, VFML…IALF, TALE…MALM, FLSL…LSGI, ATLA…STEV, WLQP…NAGI, FLPL…IVLF, IAAA…IANL, and IVLA…LGYL.

This sequence belongs to the NhaA Na(+)/H(+) (TC 2.A.33) antiporter family.

The protein localises to the cell inner membrane. The catalysed reaction is Na(+)(in) + 2 H(+)(out) = Na(+)(out) + 2 H(+)(in). Na(+)/H(+) antiporter that extrudes sodium in exchange for external protons. The chain is Na(+)/H(+) antiporter NhaA from Sodalis glossinidius (strain morsitans).